We begin with the raw amino-acid sequence, 100 residues long: MPRRSYSVIGRVQGVGFRSWTRRTALRLDLRGWVRNEPDGTVRLCADGTDEALATLETALRKGPMFSRVDHVVKHDDPAHEGPLPDTFDIRFRAPGSASE.

The Acylphosphatase-like domain maps to Arg3–Phe92. Active-site residues include Arg18 and Asn36. The disordered stretch occupies residues Asp76 to Glu100.

It belongs to the acylphosphatase family.

The enzyme catalyses an acyl phosphate + H2O = a carboxylate + phosphate + H(+). The polypeptide is Acylphosphatase (acyP) (Nitratidesulfovibrio vulgaris (strain ATCC 29579 / DSM 644 / CCUG 34227 / NCIMB 8303 / VKM B-1760 / Hildenborough) (Desulfovibrio vulgaris)).